A 174-amino-acid chain; its full sequence is Interferon gamma (174 aa).

The first 23 residues, 1–23, serve as a signal peptide directing secretion; it reads MNSTRCILALLLCLTQAMSGCYG. Gln24 is modified (pyrrolidone carboxylic acid). N-linked (GlcNAc...) asparagine glycosylation is found at Asn39 and Asn106.

Belongs to the type II (or gamma) interferon family. Homodimer. Interacts with IFNGR1 (via extracellular domain); this interaction promotes IFNGR1 dimerization. In terms of tissue distribution, released primarily from activated T lymphocytes.

It is found in the secreted. In terms of biological role, type II interferon produced by immune cells such as T-cells and NK cells that plays crucial roles in antimicrobial, antiviral, and antitumor responses by activating effector immune cells and enhancing antigen presentation. Primarily signals through the JAK-STAT pathway after interaction with its receptor IFNGR1 to affect gene regulation. Upon IFNG binding, IFNGR1 intracellular domain opens out to allow association of downstream signaling components JAK2, JAK1 and STAT1, leading to STAT1 activation, nuclear translocation and transcription of IFNG-regulated genes. Many of the induced genes are transcription factors such as IRF1 that are able to further drive regulation of a next wave of transcription. Plays a role in class I antigen presentation pathway by inducing a replacement of catalytic proteasome subunits with immunoproteasome subunits. In turn, increases the quantity, quality, and repertoire of peptides for class I MHC loading. Increases the efficiency of peptide generation also by inducing the expression of activator PA28 that associates with the proteasome and alters its proteolytic cleavage preference. Up-regulates as well MHC II complexes on the cell surface by promoting expression of several key molecules such as cathepsins B/CTSB, H/CTSH, and L/CTSL. Participates in the regulation of hematopoietic stem cells during development and under homeostatic conditions by affecting their development, quiescence, and differentiation. This chain is Interferon gamma (IFNG), found in Phodopus sungorus (Striped hairy-footed hamster).